We begin with the raw amino-acid sequence, 488 residues long: Cysteine--tRNA ligase (488 aa).

C29 is a Zn(2+) binding site. The short motif at 31–41 (ATVQGMPHVGH) is the 'HIGH' region element. Zn(2+) is bound by residues C227, H252, and E256. The 'KMSKS' region motif lies at 283–287 (KMSKS). K286 is an ATP binding site.

Belongs to the class-I aminoacyl-tRNA synthetase family. In terms of assembly, monomer. Zn(2+) serves as cofactor.

It localises to the cytoplasm. The enzyme catalyses tRNA(Cys) + L-cysteine + ATP = L-cysteinyl-tRNA(Cys) + AMP + diphosphate. This is Cysteine--tRNA ligase from Pseudarthrobacter chlorophenolicus (strain ATCC 700700 / DSM 12829 / CIP 107037 / JCM 12360 / KCTC 9906 / NCIMB 13794 / A6) (Arthrobacter chlorophenolicus).